Reading from the N-terminus, the 469-residue chain is Interstitial collagenase (469 aa).

Residues 1–19 (MHSFPPLLLLLFWGVVSHS) form the signal peptide. Residues 20-99 (FPATLETQEQ…PRCGVPDVAQ (80 aa)) constitute a propeptide, activation peptide. A Phosphoserine modification is found at Ser-57. The Cysteine switch signature appears at 90 to 97 (PRCGVPDV). Residue Cys-92 coordinates Zn(2+). The interval 98–276 (AQFVLTEGNP…VQPIGPQTPK (179 aa)) is metalloprotease. The N-linked (GlcNAc...) asparagine glycan is linked to Asn-120. The Ca(2+) site is built by Asp-124 and Asp-158. Residues His-168 and Asp-170 each contribute to the Zn(2+) site. Asp-175, Gly-176, Gly-178, and Asn-180 together coordinate Ca(2+). His-183 contributes to the Zn(2+) binding site. Residues Gly-190, Gly-192, and Asp-194 each contribute to the Ca(2+) site. Residue His-196 coordinates Zn(2+). Ca(2+) is bound by residues Asp-198, Glu-199, and Glu-201. His-218 contributes to the Zn(2+) binding site. Glu-219 is an active-site residue. Positions 222 and 228 each coordinate Zn(2+). Thr-274 bears the Phosphothreonine mark. 4 Hemopexin repeats span residues 275-324 (PKAC…WPQL), 325-371 (PNGL…FGFP), 374-422 (VKHI…FPGI), and 423-466 (GHKV…WFNC). Cysteines 278 and 466 form a disulfide. Positions 285 and 329 each coordinate Ca(2+). The residue at position 360 (Tyr-360) is a Phosphotyrosine; by PKDCC. Asp-378 and Asp-427 together coordinate Ca(2+).

The protein belongs to the peptidase M10A family. In terms of assembly, (Microbial infection) Interacts with HIV-1 Tat. The cofactor is Ca(2+). Zn(2+) is required as a cofactor. Undergoes autolytic cleavage to two major forms (22 kDa and 27 kDa). A minor form (25 kDa) is the glycosylated form of the 22 kDa form. The 27 kDa form has no activity while the 22/25 kDa form can act as activator for collagenase. Post-translationally, tyrosine phosphorylated in platelets by PKDCC/VLK.

Its subcellular location is the secreted. It is found in the extracellular space. It localises to the extracellular matrix. The catalysed reaction is Cleavage of the triple helix of collagen at about three-quarters of the length of the molecule from the N-terminus, at 775-Gly-|-Ile-776 in the alpha1(I) chain. Cleaves synthetic substrates and alpha-macroglobulins at bonds where P1' is a hydrophobic residue.. With respect to regulation, can be activated without removal of the activation peptide. Its function is as follows. Cleaves collagens of types I, II, and III at one site in the helical domain. Also cleaves collagens of types VII and X. In case of HIV infection, interacts and cleaves the secreted viral Tat protein, leading to a decrease in neuronal Tat's mediated neurotoxicity. The chain is Interstitial collagenase (MMP1) from Homo sapiens (Human).